The primary structure comprises 214 residues: MRIILLGAPGAGKGTQANFIMNKFGIPQISTGDMLRAAIKAGTELGKQAKSVIDAGQLVSDEIILGLIKERIAQDDCEKGFLLDGFPRTIPQADGLKEMGIAVDYVVEFDVADDVIVERMAGRRAHLPSGRTYHNVYNPPKEEGKDDITGEELVVRDDDKEETVRARLGVYHDQTAPLISYYGKEAEAGNTKYLKFDGTKQVAEVSAELEKALA.

An ATP-binding site is contributed by 10–15; the sequence is GAGKGT. The segment at 30 to 59 is NMP; sequence STGDMLRAAIKAGTELGKQAKSVIDAGQLV. AMP contacts are provided by residues Thr-31, Arg-36, 57-59, 85-88, and Gln-92; these read QLV and GFPR. The tract at residues 122 to 159 is LID; sequence GRRAHLPSGRTYHNVYNPPKEEGKDDITGEELVVRDDD. ATP is bound by residues Arg-123 and 132–133; that span reads TY. AMP contacts are provided by Arg-156 and Arg-167. Position 200 (Lys-200) interacts with ATP.

It belongs to the adenylate kinase family. As to quaternary structure, monomer.

It localises to the cytoplasm. It carries out the reaction AMP + ATP = 2 ADP. It participates in purine metabolism; AMP biosynthesis via salvage pathway; AMP from ADP: step 1/1. Functionally, catalyzes the reversible transfer of the terminal phosphate group between ATP and AMP. Plays an important role in cellular energy homeostasis and in adenine nucleotide metabolism. The polypeptide is Adenylate kinase (Vibrio atlanticus (strain LGP32) (Vibrio splendidus (strain Mel32))).